A 240-amino-acid chain; its full sequence is Lactate utilization protein C (240 aa).

Belongs to the LutC/YkgG family.

In terms of biological role, is involved in L-lactate degradation and allows cells to grow with lactate as the sole carbon source. The protein is Lactate utilization protein C of Bacillus licheniformis (strain ATCC 14580 / DSM 13 / JCM 2505 / CCUG 7422 / NBRC 12200 / NCIMB 9375 / NCTC 10341 / NRRL NRS-1264 / Gibson 46).